The sequence spans 654 residues: Glycogen debranching enzyme (654 aa).

Asp-336 functions as the Nucleophile in the catalytic mechanism. Residue Glu-371 is the Proton donor of the active site. Residues 459–484 form a disordered region; sequence EANGEENRDGTNSNYSDNHGKEGLGG.

Belongs to the glycosyl hydrolase 13 family.

It catalyses the reaction Hydrolysis of (1-&gt;6)-alpha-D-glucosidic linkages to branches with degrees of polymerization of three or four glucose residues in limit dextrin.. It functions in the pathway glycan degradation; glycogen degradation. In terms of biological role, removes maltotriose and maltotetraose chains that are attached by 1,6-alpha-linkage to the limit dextrin main chain, generating a debranched limit dextrin. This chain is Glycogen debranching enzyme, found in Salmonella typhi.